We begin with the raw amino-acid sequence, 145 residues long: MAAHELKEALETLKETGVRITPQRHAILEYLVNSMAHPTADDIYKALEGKFPNMSVATVYNNLRVFRESGLVKELTYGDASSRFDFVTSDHYHAICENCGKIVDFHYPGLDEVEQLAAHVTGFKVSHHRLEIYGVCQECSKKENH.

The interval 1 to 78 is DNA-binding; it reads MAAHELKEAL…SGLVKELTYG (78 aa). The Zn(2+) site is built by C96, C99, C136, and C139.

This sequence belongs to the Fur family. In terms of assembly, homodimer. It depends on Mn(2+) as a cofactor. The cofactor is Fe(2+). Zn(2+) is required as a cofactor. Possibly oxidized on a cysteine residue; the Cys-SOH formed in response to oxidative signaling may rapidly react with a Cys-SH to form a disulfide bond, leading to the loss of metal ion and inactivation of repressor function. Oxidized PerR can be further reduced by thiol reductants and repressor activity restored.

The protein localises to the cytoplasm. Hydrogen and organic peroxide sensor. Represses the expression of a regulon of peroxide-inducible genes such as katA, ahpC, ahpF, the heme biosynthesis operon (hemAXCDBL), fur, perR, zosA and mrgA. In Bacillus subtilis (strain 168), this protein is Peroxide operon regulator (perR).